A 596-amino-acid chain; its full sequence is Probable lysosomal cobalamin transporter (596 aa).

Helical transmembrane passes span 13–33 (IWVAYAVAVALVLLVAIITTF), 45–65 (VSIVAIVSLTSLLATVFLLPV), 99–119 (VVYYTLYSFDALLCLIVIPFA), 150–170 (LGFVFLVLILFLLGFFVPAAG), 201–221 (LLITLGTFLYTLYTGAGLALL), 318–338 (LLGGILLLLLSILVWASMLIT), 353–373 (GYILGHINVFQPVNWIFVQSA), 381–401 (ILMALLVLFFFGSSITGIATI), 425–445 (IATVMLALIILAINYAIAMIV), and 512–532 (VFGAIDFWAQFAFLGVFMVVF). The N-linked (GlcNAc...) asparagine glycan is linked to asparagine 543. Residues 576-596 (GRAKNRNGYGTGGGEGSNGRG) are disordered. Residues 584–596 (YGTGGGEGSNGRG) show a composition bias toward gly residues.

Belongs to the LIMR family. LMBRD1 subfamily.

It is found in the lysosome membrane. Functionally, probable lysosomal cobalamin transporter. Required to export cobalamin from lysosomes allowing its conversion to cofactors. This Podospora anserina (strain S / ATCC MYA-4624 / DSM 980 / FGSC 10383) (Pleurage anserina) protein is Probable lysosomal cobalamin transporter.